A 357-amino-acid chain; its full sequence is Inositol-tetrakisphosphate 1-kinase 3 (357 aa).

The 1D-myo-inositol 1,3,4-trisphosphate site is built by Lys-56 and Lys-98. ATP contacts are provided by Arg-133 and Lys-183. The 1D-myo-inositol 1,3,4-trisphosphate site is built by His-190 and Lys-222. ATP-binding positions include Gln-211–Lys-222, Ser-237, and Ser-262. Positions 302, 317, and 319 each coordinate Mg(2+). 1D-myo-inositol 1,3,4-trisphosphate is bound at residue Asn-319.

The protein belongs to the ITPK1 family. As to quaternary structure, monomer. Mg(2+) serves as cofactor. In terms of tissue distribution, expressed in roots, leaves, flowers, anthers and embryos.

It carries out the reaction 1D-myo-inositol 3,4,5,6-tetrakisphosphate + ATP = 1D-myo-inositol 1,3,4,5,6-pentakisphosphate + ADP + H(+). The enzyme catalyses 1D-myo-inositol 1,3,4-trisphosphate + ATP = 1D-myo-inositol 1,3,4,5-tetrakisphosphate + ADP + H(+). It catalyses the reaction 1D-myo-inositol 1,3,4-trisphosphate + ATP = 1D-myo-inositol 1,3,4,6-tetrakisphosphate + ADP + H(+). Kinase that can phosphorylate various inositol polyphosphate such as Ins(3,4,5,6)P4 or Ins(1,3,4)P3 and participates in phytic acid biosynthesis in developing seeds. Phytic acid is the primary storage form of phosphorus in cereal grains and other plant seeds. In Oryza sativa subsp. japonica (Rice), this protein is Inositol-tetrakisphosphate 1-kinase 3.